Reading from the N-terminus, the 123-residue chain is MPTIKQLIRNTRQQIRNVTKSPALRGCPQRRGTCTRVYTITPKKPNSALRKVARVRLTSGFEITAYIPGIGHNLQEHSVVLVRGGRVKDLPGVRYHIVRGTLDAVGVKDRQQGRSKYGVKKPK.

It belongs to the universal ribosomal protein uS12 family. Part of the 30S ribosomal subunit.

It localises to the plastid. Its subcellular location is the chloroplast. In terms of biological role, with S4 and S5 plays an important role in translational accuracy. Located at the interface of the 30S and 50S subunits. In Arabis hirsuta (Hairy rock-cress), this protein is Small ribosomal subunit protein uS12cz/uS12cy (rps12-A).